We begin with the raw amino-acid sequence, 79 residues long: Conotoxin VnMKLT1-01122 (79 aa).

The signal sequence occupies residues 1 to 22 (MKLTCMKIVAVLFLTAWTFVTA). Residues 23–48 (DDSRNGLEYLFPKAHYEMNPEASKLN) constitute a propeptide that is removed on maturation. Glutamine 51 carries the pyrrolidone carboxylic acid modification. 3 disulfide bridges follow: cysteine 53–cysteine 70, cysteine 60–cysteine 74, and cysteine 69–cysteine 78.

Belongs to the conotoxin O1 superfamily. In terms of tissue distribution, expressed by the venom duct.

The protein localises to the secreted. In Conus ventricosus (Mediterranean cone), this protein is Conotoxin VnMKLT1-01122.